The sequence spans 89 residues: Small ribosomal subunit protein eS25A (89 aa).

This sequence belongs to the eukaryotic ribosomal protein eS25 family. In terms of assembly, component of the small ribosomal subunit (SSU). Mature yeast ribosomes consist of a small (40S) and a large (60S) subunit. The 40S small subunit contains 1 molecule of ribosomal RNA (18S rRNA) and at least 33 different proteins. The large 60S subunit contains 3 rRNA molecules (25S, 5.8S and 5S rRNA) and at least 46 different proteins.

The protein localises to the cytoplasm. In terms of biological role, component of the ribosome, a large ribonucleoprotein complex responsible for the synthesis of proteins in the cell. The small ribosomal subunit (SSU) binds messenger RNAs (mRNAs) and translates the encoded message by selecting cognate aminoacyl-transfer RNA (tRNA) molecules. The large subunit (LSU) contains the ribosomal catalytic site termed the peptidyl transferase center (PTC), which catalyzes the formation of peptide bonds, thereby polymerizing the amino acids delivered by tRNAs into a polypeptide chain. The nascent polypeptides leave the ribosome through a tunnel in the LSU and interact with protein factors that function in enzymatic processing, targeting, and the membrane insertion of nascent chains at the exit of the ribosomal tunnel. In Schizosaccharomyces pombe (strain 972 / ATCC 24843) (Fission yeast), this protein is Small ribosomal subunit protein eS25A (rps2502).